We begin with the raw amino-acid sequence, 536 residues long: Phosphoenolpyruvate carboxykinase (ATP) (536 aa).

Residues Arg-61, Tyr-195, and Lys-201 each coordinate substrate. Residues Lys-201, His-220, and 236–244 (GLSGTGKTT) each bind ATP. 2 residues coordinate Mn(2+): Lys-201 and His-220. Position 257 (Asp-257) interacts with Mn(2+). Positions 285, 322, and 447 each coordinate ATP. Arg-322 lines the substrate pocket.

It belongs to the phosphoenolpyruvate carboxykinase (ATP) family. Requires Mn(2+) as cofactor.

The protein resides in the cytoplasm. The enzyme catalyses oxaloacetate + ATP = phosphoenolpyruvate + ADP + CO2. The protein operates within carbohydrate biosynthesis; gluconeogenesis. Its function is as follows. Involved in the gluconeogenesis. Catalyzes the conversion of oxaloacetate (OAA) to phosphoenolpyruvate (PEP) through direct phosphoryl transfer between the nucleoside triphosphate and OAA. The sequence is that of Phosphoenolpyruvate carboxykinase (ATP) from Rhizobium johnstonii (strain DSM 114642 / LMG 32736 / 3841) (Rhizobium leguminosarum bv. viciae).